Here is a 347-residue protein sequence, read N- to C-terminus: MNTPAQKKITIVDTTLRDGMSSVSHQFTPQNVADIARGLDRAGVGTIEVAHGIGLGASSIQYGFAAATDPDYVRAAVDAVENADIAALYVPGIATLAELQKAIDAGIKTVRVAVHCTEADCGQQPVEWAKEQGLTVMTFLMMSHKLDPEPLAEQAAKLDSYGADVVYVVDSAGAMVPRHAGDRVAALRQAISADIGFHAHNNLGVGIANALTAAENGATFIDGSLRGLGASAGNAQTEVLAAAFERAGWDTGVDLFPLIDTAEHIVAPLMKEPQIVDETALILGYAGVYSTFFHPTKRAAKKFGVPARDILMELGRRGVIGGQEDMIIDVASELAGRTYEIPASAAV.

The 251-residue stretch at 9–259 folds into the Pyruvate carboxyltransferase domain; it reads ITIVDTTLRD…DTGVDLFPLI (251 aa). Substrate is bound by residues 17-18, S171, and H198; that span reads RD. D18 is a Mn(2+) binding site. Residues H198 and H200 each coordinate Mn(2+). Y289 is a substrate binding site.

This sequence belongs to the 4-hydroxy-2-oxovalerate aldolase family.

It catalyses the reaction (S)-4-hydroxy-2-oxopentanoate = acetaldehyde + pyruvate. The polypeptide is 4-hydroxy-2-oxovalerate aldolase 2 (Rhodococcus opacus (strain B4)).